A 505-amino-acid polypeptide reads, in one-letter code: Histidine ammonia-lyase (505 aa).

Residues 144-146 (ASG) constitute a cross-link (5-imidazolinone (Ala-Gly)). Serine 145 carries the post-translational modification 2,3-didehydroalanine (Ser).

The protein belongs to the PAL/histidase family. Post-translationally, contains an active site 4-methylidene-imidazol-5-one (MIO), which is formed autocatalytically by cyclization and dehydration of residues Ala-Ser-Gly.

It localises to the cytoplasm. It catalyses the reaction L-histidine = trans-urocanate + NH4(+). It participates in amino-acid degradation; L-histidine degradation into L-glutamate; N-formimidoyl-L-glutamate from L-histidine: step 1/3. The protein is Histidine ammonia-lyase of Legionella pneumophila (strain Corby).